The following is an 87-amino-acid chain: MKSNKVTFFLGLFLVSAFCVRLTENMCFKDDDCINQGEWCPVLRVCSYAECICPWGTRSKLPSCQIICAHLDKKSVNSYNPCGCNYK.

Residues 1 to 19 (MKSNKVTFFLGLFLVSAFC) form the signal peptide. Disulfide bonds link C27-C46, C33-C51, and C40-C53.

The protein belongs to the DEFL family.

The protein localises to the secreted. The chain is Putative defensin-like protein 304 from Arabidopsis thaliana (Mouse-ear cress).